We begin with the raw amino-acid sequence, 270 residues long: 4-hydroxy-tetrahydrodipicolinate reductase (270 aa).

Residues 9–14 and E35 each bind NAD(+); that span reads GAGGRM. R36 is an NADP(+) binding site. NAD(+)-binding positions include 99 to 101 and 123 to 126; these read GTT and ASNY. The active-site Proton donor/acceptor is the H156. Position 157 (H157) interacts with (S)-2,3,4,5-tetrahydrodipicolinate. The active-site Proton donor is the K160. 166–167 is a binding site for (S)-2,3,4,5-tetrahydrodipicolinate; sequence GT.

Belongs to the DapB family.

The protein resides in the cytoplasm. The catalysed reaction is (S)-2,3,4,5-tetrahydrodipicolinate + NAD(+) + H2O = (2S,4S)-4-hydroxy-2,3,4,5-tetrahydrodipicolinate + NADH + H(+). It carries out the reaction (S)-2,3,4,5-tetrahydrodipicolinate + NADP(+) + H2O = (2S,4S)-4-hydroxy-2,3,4,5-tetrahydrodipicolinate + NADPH + H(+). Its pathway is amino-acid biosynthesis; L-lysine biosynthesis via DAP pathway; (S)-tetrahydrodipicolinate from L-aspartate: step 4/4. Catalyzes the conversion of 4-hydroxy-tetrahydrodipicolinate (HTPA) to tetrahydrodipicolinate. In Histophilus somni (strain 129Pt) (Haemophilus somnus), this protein is 4-hydroxy-tetrahydrodipicolinate reductase.